We begin with the raw amino-acid sequence, 266 residues long: MHPMLNIAIRAVRKGGNFIIQNYERRKFVKEDVEKNKVFLNNIIYKTNKIISEIIHKSYPYHTILKKHENILVKKNEKNTVWIITELDGKTNFLKYFPYFCVSIAVVVKNKTEISVIYDPIKNDLFTAVKGQGSQLNGYRTRCSAINTLNYSTVAVNPSNKIHNLTSSYFEIYKKLIISGISFRCTGSSILDSAYVAAGKIDCLFDFNLDPNKFVASKLQVREAGCLINNFMGEYEHNNNNYSGNITSSSKFIRLINEKIRECYLI.

Leu-87–Lys-90 contacts substrate.

It belongs to the inositol monophosphatase superfamily. As to quaternary structure, homodimer. The rRNA transcription and antitermination complex (rrnTAC) consists of RNA polymerase (RNAP), NusA, NusB, NusE (rpsJ), NusG, SubB, ribosomal protein S4, DNA and precursor rRNA; S4 is more flexible than other subunits. Requires Mg(2+) as cofactor.

It is found in the cytoplasm. It catalyses the reaction a myo-inositol phosphate + H2O = myo-inositol + phosphate. Functionally, part of the processive rRNA transcription and antitermination complex (rrnTAC). The complex forms an RNA-chaperone ring around the RNA exit tunnel of RNA polymerase (RNAP). It supports rapid transcription and antitermination of rRNA operons, cotranscriptional rRNA folding, and annealing of distal rRNA regions to allow correct ribosome biogenesis. This subunit may play a central role in organizing the structure. The sequence is that of Nus factor SuhB (suhB) from Buchnera aphidicola subsp. Acyrthosiphon pisum (strain APS) (Acyrthosiphon pisum symbiotic bacterium).